A 282-amino-acid chain; its full sequence is Polyamine aminopropyltransferase (282 aa).

The PABS domain maps to 11–239; sequence IEWYPRGYGV…SPWSFLVGVK (229 aa). Gln36 contacts S-methyl-5'-thioadenosine. His67 and Asp91 together coordinate spermidine. Residues Glu111 and 142–143 each bind S-methyl-5'-thioadenosine; that span reads DG. Residue Asp160 is the Proton acceptor of the active site. 160–163 lines the spermidine pocket; that stretch reads DSTD. Pro167 provides a ligand contact to S-methyl-5'-thioadenosine.

Belongs to the spermidine/spermine synthase family. Homodimer or homotetramer.

Its subcellular location is the cytoplasm. It catalyses the reaction S-adenosyl 3-(methylsulfanyl)propylamine + putrescine = S-methyl-5'-thioadenosine + spermidine + H(+). It functions in the pathway amine and polyamine biosynthesis; spermidine biosynthesis; spermidine from putrescine: step 1/1. In terms of biological role, catalyzes the irreversible transfer of a propylamine group from the amino donor S-adenosylmethioninamine (decarboxy-AdoMet) to putrescine (1,4-diaminobutane) to yield spermidine. The protein is Polyamine aminopropyltransferase of Thermococcus onnurineus (strain NA1).